Consider the following 133-residue polypeptide: uncharacterized protein (133 aa).

Positions 82-133 (KIKSYSPSRSQKALNNPSKIRTKQTNNDTTIQQSNNTTSTNTKPSSNTNTQQ) are disordered. Residues 86 to 100 (YSPSRSQKALNNPSK) show a composition bias toward polar residues. The segment covering 105–133 (QTNNDTTIQQSNNTTSTNTKPSSNTNTQQ) has biased composition (low complexity).

This is an uncharacterized protein from Acidianus convivator (ABV).